The following is a 275-amino-acid chain: Formamidopyrimidine-DNA glycosylase (275 aa).

Pro2 (schiff-base intermediate with DNA) is an active-site residue. Glu3 serves as the catalytic Proton donor. Lys59 serves as the catalytic Proton donor; for beta-elimination activity. The DNA site is built by His93, Arg112, and Arg153. The FPG-type zinc-finger motif lies at 238 to 272 (NVYDRVGKPCPRCQTAIERIVVAQRSTFFCPLCQV). Arg262 serves as the catalytic Proton donor; for delta-elimination activity.

Belongs to the FPG family. Monomer. Requires Zn(2+) as cofactor.

The enzyme catalyses Hydrolysis of DNA containing ring-opened 7-methylguanine residues, releasing 2,6-diamino-4-hydroxy-5-(N-methyl)formamidopyrimidine.. It catalyses the reaction 2'-deoxyribonucleotide-(2'-deoxyribose 5'-phosphate)-2'-deoxyribonucleotide-DNA = a 3'-end 2'-deoxyribonucleotide-(2,3-dehydro-2,3-deoxyribose 5'-phosphate)-DNA + a 5'-end 5'-phospho-2'-deoxyribonucleoside-DNA + H(+). Functionally, involved in base excision repair of DNA damaged by oxidation or by mutagenic agents. Acts as a DNA glycosylase that recognizes and removes damaged bases. Has a preference for oxidized purines, such as 7,8-dihydro-8-oxoguanine (8-oxoG). Has AP (apurinic/apyrimidinic) lyase activity and introduces nicks in the DNA strand. Cleaves the DNA backbone by beta-delta elimination to generate a single-strand break at the site of the removed base with both 3'- and 5'-phosphates. The polypeptide is Formamidopyrimidine-DNA glycosylase (Chloroflexus aggregans (strain MD-66 / DSM 9485)).